A 300-amino-acid chain; its full sequence is Acetaldehyde dehydrogenase 3 (300 aa).

11–14 (SGNI) lines the NAD(+) pocket. Catalysis depends on C126, which acts as the Acyl-thioester intermediate. NAD(+)-binding positions include 157-165 (SAGPGTRAN) and N276.

It belongs to the acetaldehyde dehydrogenase family.

It catalyses the reaction acetaldehyde + NAD(+) + CoA = acetyl-CoA + NADH + H(+). The protein is Acetaldehyde dehydrogenase 3 of Rhodococcus opacus (strain B4).